Reading from the N-terminus, the 135-residue chain is Sex-regulated protein janus-A (135 aa).

Position 37 (K37) interacts with substrate. Residue H63 is the Proton acceptor of the active site. 104–106 (SQG) is a binding site for substrate.

This sequence belongs to the janus family.

In terms of biological role, janA and janB regulate somatic sex differentiation. The chain is Sex-regulated protein janus-A (janA) from Drosophila orena (Fruit fly).